The sequence spans 1075 residues: Carbamoyl phosphate synthase large chain (1075 aa).

The interval 2–403 is carboxyphosphate synthetic domain; it reads PKRTDIKSIL…SLQKALRGLE (402 aa). The ATP site is built by Arg129, Arg169, Gly175, Gly176, Glu208, Leu210, Glu215, Gly241, Ile242, His243, Gln285, and Glu299. Residues 133–328 enclose the ATP-grasp 1 domain; it reads DIAMKKIGLD…IAKVAAKLAV (196 aa). Positions 285, 299, and 301 each coordinate Mg(2+). Mn(2+)-binding residues include Gln285, Glu299, and Asn301. The tract at residues 404–553 is oligomerization domain; that stretch reads VGATGFDPKV…YSTYEDECEA (150 aa). The tract at residues 554-936 is carbamoyl phosphate synthetic domain; it reads NPSIDRDKIM…AFAKAQLGSN (383 aa). The region spanning 679-870 is the ATP-grasp 2 domain; that stretch reads QHAVDRLKLK…LAKVAARVMA (192 aa). Positions 715, 754, 756, 761, 786, 787, 788, 789, 829, and 841 each coordinate ATP. Mg(2+) contacts are provided by Gln829, Glu841, and Asn843. Mn(2+) contacts are provided by Gln829, Glu841, and Asn843. The 139-residue stretch at 937 to 1075 folds into the MGS-like domain; the sequence is STMKKQGRAL…QEMHAQIKKS (139 aa). The allosteric domain stretch occupies residues 937–1075; it reads STMKKQGRAL…QEMHAQIKKS (139 aa).

This sequence belongs to the CarB family. In terms of assembly, composed of two chains; the small (or glutamine) chain promotes the hydrolysis of glutamine to ammonia, which is used by the large (or ammonia) chain to synthesize carbamoyl phosphate. Tetramer of heterodimers (alpha,beta)4. Mg(2+) serves as cofactor. The cofactor is Mn(2+).

It carries out the reaction hydrogencarbonate + L-glutamine + 2 ATP + H2O = carbamoyl phosphate + L-glutamate + 2 ADP + phosphate + 2 H(+). It catalyses the reaction hydrogencarbonate + NH4(+) + 2 ATP = carbamoyl phosphate + 2 ADP + phosphate + 2 H(+). The protein operates within amino-acid biosynthesis; L-arginine biosynthesis; carbamoyl phosphate from bicarbonate: step 1/1. It participates in pyrimidine metabolism; UMP biosynthesis via de novo pathway; (S)-dihydroorotate from bicarbonate: step 1/3. Functionally, large subunit of the glutamine-dependent carbamoyl phosphate synthetase (CPSase). CPSase catalyzes the formation of carbamoyl phosphate from the ammonia moiety of glutamine, carbonate, and phosphate donated by ATP, constituting the first step of 2 biosynthetic pathways, one leading to arginine and/or urea and the other to pyrimidine nucleotides. The large subunit (synthetase) binds the substrates ammonia (free or transferred from glutamine from the small subunit), hydrogencarbonate and ATP and carries out an ATP-coupled ligase reaction, activating hydrogencarbonate by forming carboxy phosphate which reacts with ammonia to form carbamoyl phosphate. This chain is Carbamoyl phosphate synthase large chain, found in Salmonella typhimurium (strain LT2 / SGSC1412 / ATCC 700720).